We begin with the raw amino-acid sequence, 425 residues long: Serine hydroxymethyltransferase (425 aa).

(6S)-5,6,7,8-tetrahydrofolate-binding positions include Leu-128 and 132 to 134 (GHL). Lys-237 is subject to N6-(pyridoxal phosphate)lysine.

Belongs to the SHMT family. In terms of assembly, homodimer. The cofactor is pyridoxal 5'-phosphate.

It is found in the cytoplasm. The catalysed reaction is (6R)-5,10-methylene-5,6,7,8-tetrahydrofolate + glycine + H2O = (6S)-5,6,7,8-tetrahydrofolate + L-serine. The protein operates within one-carbon metabolism; tetrahydrofolate interconversion. It participates in amino-acid biosynthesis; glycine biosynthesis; glycine from L-serine: step 1/1. In terms of biological role, catalyzes the reversible interconversion of serine and glycine with tetrahydrofolate (THF) serving as the one-carbon carrier. This reaction serves as the major source of one-carbon groups required for the biosynthesis of purines, thymidylate, methionine, and other important biomolecules. Also exhibits THF-independent aldolase activity toward beta-hydroxyamino acids, producing glycine and aldehydes, via a retro-aldol mechanism. The polypeptide is Serine hydroxymethyltransferase (Wolbachia pipientis wMel).